A 359-amino-acid chain; its full sequence is sn-1 linoleoyl-lipid 6-desaturase (359 aa).

The next 2 helical transmembrane spans lie at 45–65 and 69–89; these read LIIV…PVIF and LLGC…VGHD. Residues 88 to 92 carry the Histidine box-1 motif; sequence HDANH. A Histidine box-2 motif is present at residues 123–128; it reads HNYLHH. The next 3 membrane-spanning stretches (helical) occupy residues 165–185, 206–226, and 231–251; these read IWGL…YLVL, LLGI…ALGF, and VLIG…TIFM. A Histidine box-3 motif is present at residues 306–310; sequence HHLFP.

The protein belongs to the fatty acid desaturase type 2 family. The cofactor is Fe(2+).

The protein resides in the membrane. It catalyses the reaction a 1-[(9Z,12Z)-octadecdienoyl]-2-acyl-glycerolipid + 2 reduced [2Fe-2S]-[ferredoxin] + O2 + 2 H(+) = a 1-[(6Z,9Z,12Z)-octadectrienoyl]-2-acyl-glycerolipid + 2 oxidized [2Fe-2S]-[ferredoxin] + 2 H2O. It participates in lipid metabolism; polyunsaturated fatty acid biosynthesis. Functionally, desaturase involved in fatty acid biosynthesis. Introduces a double bond at carbon 6 of linoleoyl group (18:2) attached to the sn-1 position of the glycerol moiety of membrane glycerolipids, leading to the formation of gamma-linolenic acid (GLA). This is sn-1 linoleoyl-lipid 6-desaturase from Synechocystis sp. (strain ATCC 27184 / PCC 6803 / Kazusa).